A 290-amino-acid polypeptide reads, in one-letter code: 4-diphosphocytidyl-2-C-methyl-D-erythritol kinase (290 aa).

Lys-8 is an active-site residue. 92 to 102 is a binding site for ATP; that stretch reads PISAGLAGGST. Residue Asp-134 is part of the active site.

The protein belongs to the GHMP kinase family. IspE subfamily.

The enzyme catalyses 4-CDP-2-C-methyl-D-erythritol + ATP = 4-CDP-2-C-methyl-D-erythritol 2-phosphate + ADP + H(+). It participates in isoprenoid biosynthesis; isopentenyl diphosphate biosynthesis via DXP pathway; isopentenyl diphosphate from 1-deoxy-D-xylulose 5-phosphate: step 3/6. In terms of biological role, catalyzes the phosphorylation of the position 2 hydroxy group of 4-diphosphocytidyl-2C-methyl-D-erythritol. The polypeptide is 4-diphosphocytidyl-2-C-methyl-D-erythritol kinase (Caldicellulosiruptor saccharolyticus (strain ATCC 43494 / DSM 8903 / Tp8T 6331)).